Consider the following 326-residue polypeptide: uncharacterized protein (326 aa).

ATP is bound at residue Gly-127–Ser-134.

This sequence belongs to the GSP E family.

This is an uncharacterized protein from Escherichia coli (strain K12).